We begin with the raw amino-acid sequence, 242 residues long: Ribosomal RNA small subunit methyltransferase G (242 aa).

S-adenosyl-L-methionine is bound by residues Gly-79, Phe-84, 130-131, and Arg-150; that span reads AE.

Belongs to the methyltransferase superfamily. RNA methyltransferase RsmG family.

The protein resides in the cytoplasm. In terms of biological role, specifically methylates the N7 position of a guanine in 16S rRNA. The sequence is that of Ribosomal RNA small subunit methyltransferase G from Levilactobacillus brevis (strain ATCC 367 / BCRC 12310 / CIP 105137 / JCM 1170 / LMG 11437 / NCIMB 947 / NCTC 947) (Lactobacillus brevis).